A 435-amino-acid chain; its full sequence is Type A flavoprotein fprA (435 aa).

The interval 48-228 is zinc metallo-hydrolase; the sequence is ANGTTYNAYA…PFRSFVAQVL (181 aa). Positions 98, 100, 102, 167, 186, and 243 each coordinate Fe cation. Residues 276–415 enclose the Flavodoxin-like domain; sequence LLIFYVSAYR…EGRAFGRRLA (140 aa).

This sequence in the N-terminal section; belongs to the zinc metallo-hydrolase group 3 family. Homodimer. FMN is required as a cofactor. The cofactor is Fe cation.

In terms of biological role, low-potential electron donor to a number of redox enzymes. This Rhodobacter capsulatus (Rhodopseudomonas capsulata) protein is Type A flavoprotein fprA (fprA).